The sequence spans 146 residues: uncharacterized protein (146 aa).

Disordered stretches follow at residues 1–33 (MATF…GSYR) and 50–70 (QHWR…SWEG).

This is an uncharacterized protein from Homo sapiens (Human).